Here is a 133-residue protein sequence, read N- to C-terminus: uncharacterized protein (133 aa).

The interval 107-133 is disordered; the sequence is TSHHRAAGLQSQHAPGSGRVRITGGKV.

This is an uncharacterized protein from Homo sapiens (Human).